Reading from the N-terminus, the 102-residue chain is ATP-dependent Clp protease adapter protein ClpS (102 aa).

The protein belongs to the ClpS family. In terms of assembly, binds to the N-terminal domain of the chaperone ClpA.

Its function is as follows. Involved in the modulation of the specificity of the ClpAP-mediated ATP-dependent protein degradation. This Shewanella sp. (strain ANA-3) protein is ATP-dependent Clp protease adapter protein ClpS.